The chain runs to 291 residues: MAITAAMVKELRESTGAGMMDAKKALVENDGDMEAAVDWLRTKGLAKAAKKSGRTAAEGLVAVVVDGGKGVAVEVNSETDFVAKNGEFQTMVAGIAKAALSVNTVEELAEADLGGKTVATTLTDKIATIGENMTLRRMAKLEGETVVSYVHNAATDGMGKIGVLVALSGGDEAIGKQVAMHIAAVNPAALSEADLDPAIVEKERQVQIDIARESGKPEQVIEKMIEGRMKKFVAESTLLNQQFVVNPDLTVEAAAKEAGATVTGFIRVEVGEGIEVEKEDFAAEVAKAAQG.

Residues T79–V82 are involved in Mg(2+) ion dislocation from EF-Tu.

The protein belongs to the EF-Ts family.

Its subcellular location is the cytoplasm. In terms of biological role, associates with the EF-Tu.GDP complex and induces the exchange of GDP to GTP. It remains bound to the aminoacyl-tRNA.EF-Tu.GTP complex up to the GTP hydrolysis stage on the ribosome. The sequence is that of Elongation factor Ts from Ruegeria sp. (strain TM1040) (Silicibacter sp.).